The chain runs to 444 residues: Exodeoxyribonuclease 7 large subunit (444 aa).

Belongs to the XseA family. As to quaternary structure, heterooligomer composed of large and small subunits.

The protein localises to the cytoplasm. It catalyses the reaction Exonucleolytic cleavage in either 5'- to 3'- or 3'- to 5'-direction to yield nucleoside 5'-phosphates.. Its function is as follows. Bidirectionally degrades single-stranded DNA into large acid-insoluble oligonucleotides, which are then degraded further into small acid-soluble oligonucleotides. This Pseudoalteromonas atlantica (strain T6c / ATCC BAA-1087) protein is Exodeoxyribonuclease 7 large subunit.